Reading from the N-terminus, the 564-residue chain is Septation ring formation regulator EzrA (564 aa).

The Extracellular portion of the chain corresponds to 1–4 (MVLF). A helical transmembrane segment spans residues 5–23 (IILAILVVILIAIGVLFYM). Residues 24-564 (RSNKRNLIEK…KHIEEQVIKE (541 aa)) are Cytoplasmic-facing. Coiled coils occupy residues 84-126 (VEEK…HQVT), 165-223 (EAAE…LIRE), 271-303 (MISR…YEVK), and 350-435 (VRQF…RRLL).

This sequence belongs to the EzrA family.

It is found in the cell membrane. Its function is as follows. Negative regulator of FtsZ ring formation; modulates the frequency and position of FtsZ ring formation. Inhibits FtsZ ring formation at polar sites. Interacts either with FtsZ or with one of its binding partners to promote depolymerization. This is Septation ring formation regulator EzrA from Staphylococcus epidermidis (strain ATCC 12228 / FDA PCI 1200).